Here is a 122-residue protein sequence, read N- to C-terminus: Large ribosomal subunit protein uL14 (122 aa).

The protein belongs to the universal ribosomal protein uL14 family. Part of the 50S ribosomal subunit. Forms a cluster with proteins L3 and L19. In the 70S ribosome, L14 and L19 interact and together make contacts with the 16S rRNA in bridges B5 and B8.

In terms of biological role, binds to 23S rRNA. Forms part of two intersubunit bridges in the 70S ribosome. The sequence is that of Large ribosomal subunit protein uL14 from Desulfitobacterium hafniense (strain DSM 10664 / DCB-2).